The sequence spans 150 residues: Large ribosomal subunit protein uL15 (150 aa).

This sequence belongs to the universal ribosomal protein uL15 family. In terms of assembly, part of the 50S ribosomal subunit.

In terms of biological role, binds to the 23S rRNA. This chain is Large ribosomal subunit protein uL15, found in Rickettsia typhi (strain ATCC VR-144 / Wilmington).